The sequence spans 66 residues: Small ribosomal subunit protein bS21 (66 aa).

It belongs to the bacterial ribosomal protein bS21 family.

In Maridesulfovibrio salexigens (strain ATCC 14822 / DSM 2638 / NCIMB 8403 / VKM B-1763) (Desulfovibrio salexigens), this protein is Small ribosomal subunit protein bS21.